We begin with the raw amino-acid sequence, 142 residues long: 3-hydroxyacyl-[acyl-carrier-protein] dehydratase FabZ (142 aa).

His-48 is an active-site residue.

It belongs to the thioester dehydratase family. FabZ subfamily.

The protein localises to the cytoplasm. The catalysed reaction is a (3R)-hydroxyacyl-[ACP] = a (2E)-enoyl-[ACP] + H2O. In terms of biological role, involved in unsaturated fatty acids biosynthesis. Catalyzes the dehydration of short chain beta-hydroxyacyl-ACPs and long chain saturated and unsaturated beta-hydroxyacyl-ACPs. In Natranaerobius thermophilus (strain ATCC BAA-1301 / DSM 18059 / JW/NM-WN-LF), this protein is 3-hydroxyacyl-[acyl-carrier-protein] dehydratase FabZ.